The following is a 339-amino-acid chain: Fructose-1,6-bisphosphatase, cytosolic (339 aa).

The Mg(2+) site is built by Glu70, Glu99, Asp120, Leu122, and Asp123. Residues 123 to 126 (DGSS), Asn214, Tyr246, Tyr266, and Lys276 each bind substrate. Glu282 provides a ligand contact to Mg(2+).

It belongs to the FBPase class 1 family. Requires Mg(2+) as cofactor.

The protein resides in the cytoplasm. It catalyses the reaction beta-D-fructose 1,6-bisphosphate + H2O = beta-D-fructose 6-phosphate + phosphate. The protein is Fructose-1,6-bisphosphatase, cytosolic of Brassica napus (Rape).